Consider the following 243-residue polypeptide: ATP-dependent dethiobiotin synthetase BioD (243 aa).

Position 12-17 (12-17 (DVGKTF)) interacts with ATP. A Mg(2+)-binding site is contributed by threonine 16. Residue lysine 37 is part of the active site. Serine 41 contributes to the substrate binding site. ATP is bound by residues aspartate 54, 115–118 (EGCG), and 179–180 (NM). Mg(2+) contacts are provided by aspartate 54 and glutamate 115.

Belongs to the dethiobiotin synthetase family. In terms of assembly, homodimer. It depends on Mg(2+) as a cofactor.

Its subcellular location is the cytoplasm. It carries out the reaction (7R,8S)-7,8-diammoniononanoate + CO2 + ATP = (4R,5S)-dethiobiotin + ADP + phosphate + 3 H(+). The protein operates within cofactor biosynthesis; biotin biosynthesis; biotin from 7,8-diaminononanoate: step 1/2. Its function is as follows. Catalyzes a mechanistically unusual reaction, the ATP-dependent insertion of CO2 between the N7 and N8 nitrogen atoms of 7,8-diaminopelargonic acid (DAPA, also called 7,8-diammoniononanoate) to form a ureido ring. The protein is ATP-dependent dethiobiotin synthetase BioD of Caldicellulosiruptor bescii (strain ATCC BAA-1888 / DSM 6725 / KCTC 15123 / Z-1320) (Anaerocellum thermophilum).